The chain runs to 549 residues: Oxygen-dependent choline dehydrogenase (549 aa).

Asp-4 to Glu-33 serves as a coordination point for FAD. Catalysis depends on His-465, which acts as the Proton acceptor.

The protein belongs to the GMC oxidoreductase family. FAD is required as a cofactor.

The enzyme catalyses choline + A = betaine aldehyde + AH2. The catalysed reaction is betaine aldehyde + NAD(+) + H2O = glycine betaine + NADH + 2 H(+). Its pathway is amine and polyamine biosynthesis; betaine biosynthesis via choline pathway; betaine aldehyde from choline (cytochrome c reductase route): step 1/1. Functionally, involved in the biosynthesis of the osmoprotectant glycine betaine. Catalyzes the oxidation of choline to betaine aldehyde and betaine aldehyde to glycine betaine at the same rate. The chain is Oxygen-dependent choline dehydrogenase from Brucella canis (strain ATCC 23365 / NCTC 10854 / RM-666).